Here is a 479-residue protein sequence, read N- to C-terminus: MAGTVSLELDPIFLKGLGYLHSKSKDSAEKLKALLDESLARGSDSIYRNSIKEAEVSKVSLPKMTKQDSKSSSSSSASSSITTTSSSKSSTSEKSKKESEKRTLEKIRVDPGEGVEPPKKPRLEKQDSHSSPIAFQTKDIPIPDFTDIDETNADDFAMEMGLACVVCRQMTVTSGNQLVECQECHNLYHQECHKPQVTDKDVNDPRLVWYCARCTRQMKRMAQKTQKPPQKPAPALATTVPLLKDPLVKKAELKPKPETTGSFQAFKRTEVKATAASGNSSSSSSSSSSLPPGLTGWAAFTKATSNVGPSSTKLSTSQSGNSKTSPAASGSKPVGLSALANVKPALATKPSGGSSAGSGNGNNGSGTVPLKAPPPLTLGKQVLSRSASGDSLGKMTVTGSLSPGAAPSSSLGGNGGSGGNGAGNGGNSAGSSSSSGNNNNNGAKASADGKAPTSQESQLNAMKRLQMVKKKAAQKKLKK.

Residues 57–140 (SKVSLPKMTK…SPIAFQTKDI (84 aa)) form a disordered region. The segment covering 70-90 (KSSSSSSASSSITTTSSSKSS) has biased composition (low complexity). Positions 91–128 (TSEKSKKESEKRTLEKIRVDPGEGVEPPKKPRLEKQDS) are enriched in basic and acidic residues. The PHD-type zinc-finger motif lies at 161 to 217 (GLACVVCRQMTVTSGNQLVECQECHNLYHQECHKPQVTDKDVNDPRLVWYCARCTRQ). Disordered stretches follow at residues 221-241 (MAQK…TTVP), 274-293 (TAAS…LPPG), and 305-479 (SNVG…KLKK). Low complexity-rich tracts occupy residues 223 to 239 (QKTQ…LATT) and 280 to 289 (SSSSSSSSSS). The span at 305 to 328 (SNVGPSSTKLSTSQSGNSKTSPAA) shows a compositional bias: polar residues. Over residues 354-364 (SSAGSGNGNNG) the composition is skewed to gly residues. Over residues 399–411 (GSLSPGAAPSSSL) the composition is skewed to low complexity. Over residues 412 to 428 (GGNGGSGGNGAGNGGNS) the composition is skewed to gly residues. A compositionally biased stretch (low complexity) spans 429-451 (AGSSSSSGNNNNNGAKASADGKA). Residues 466-479 (QMVKKKAAQKKLKK) show a composition bias toward basic residues.

This sequence belongs to the Integrator subunit 12 family. In terms of assembly, component of the Integrator complex, composed of core subunits INTS1, INTS2, INTS3, INTS4, INTS5, INTS6, INTS7, INTS8, INTS9/RC74, INTS10, INTS11/CPSF3L, INTS12, INTS13, INTS14 and INTS15. The core complex associates with protein phosphatase 2A subunits PPP2CA and PPP2R1A, to form the Integrator-PP2A (INTAC) complex.

Its subcellular location is the nucleus. In terms of biological role, component of the integrator complex, a multiprotein complex that terminates RNA polymerase II (Pol II) transcription in the promoter-proximal region of genes. The integrator complex provides a quality checkpoint during transcription elongation by driving premature transcription termination of transcripts that are unfavorably configured for transcriptional elongation: the complex terminates transcription by (1) catalyzing dephosphorylation of the C-terminal domain (CTD) of Pol II subunit POLR2A/RPB1 and SUPT5H/SPT5, (2) degrading the exiting nascent RNA transcript via endonuclease activity and (3) promoting the release of Pol II from bound DNA. The integrator complex is also involved in terminating the synthesis of non-coding Pol II transcripts, such as enhancer RNAs (eRNAs), small nuclear RNAs (snRNAs), telomerase RNAs and long non-coding RNAs (lncRNAs). The polypeptide is Integrator complex subunit 12 (ints12) (Danio rerio (Zebrafish)).